The sequence spans 271 residues: Neurexophilin-1 (271 aa).

The N-terminal stretch at 1 to 21 is a signal peptide; sequence MQAACWYVLLLLQPTVYLVTC. The II stretch occupies residues 22-97; it reads ANLTNGGKSE…WDWLRNSTDL (76 aa). N-linked (GlcNAc...) asparagine glycans are attached at residues asparagine 23, asparagine 68, asparagine 93, asparagine 146, asparagine 156, and asparagine 162. Positions 98 to 176 are III; sequence QEPRPRAKRR…LVPPTKIVEF (79 aa). Residues 177-185 are IV (linker domain); that stretch reads DLAQQTVID. Positions 186-271 are v (Cys-rich); sequence AKDSKSFNCR…HSDTPYFPSG (86 aa).

It belongs to the neurexophilin family. May be proteolytically processed at the boundary between the N-terminal non-conserved and the central conserved domain in neuron-like cells.

The protein resides in the secreted. In terms of biological role, may be signaling molecules that resemble neuropeptides. Ligand for alpha-neurexins. This chain is Neurexophilin-1 (NXPH1), found in Bos taurus (Bovine).